The following is an 85-amino-acid chain: Putative transmembrane protein ORF28 (85 aa).

The next 2 helical transmembrane spans lie at 32-52 (IMLL…VQIV) and 59-79 (LLSV…MLGI).

The protein resides in the host membrane. This is Putative transmembrane protein ORF28 from Haloarcula hispanica (His1V).